We begin with the raw amino-acid sequence, 74 residues long: Sodium channel neurotoxin MeuNaTxalpha-6 (74 aa).

An N-terminal signal peptide occupies residues 1-7 (LMTGVES). Residues 9-73 (RDAYIAKPHN…VPIRIPGKCH (65 aa)) enclose the LCN-type CS-alpha/beta domain. 4 disulfides stabilise this stretch: Cys19–Cys72, Cys23–Cys45, Cys31–Cys55, and Cys35–Cys57. Position 74 (Arg74) is a propeptide, removed by a carboxypeptidase.

The protein belongs to the long (4 C-C) scorpion toxin superfamily. Sodium channel inhibitor family. Alpha subfamily. In terms of tissue distribution, expressed by the venom gland.

Its subcellular location is the secreted. Functionally, alpha toxins bind voltage-independently at site-3 of sodium channels (Nav) and inhibit the inactivation of the activated channels, thereby blocking neuronal transmission. The chain is Sodium channel neurotoxin MeuNaTxalpha-6 from Mesobuthus eupeus (Lesser Asian scorpion).